A 340-amino-acid chain; its full sequence is N-acetyl-gamma-glutamyl-phosphate reductase (340 aa).

Residue cysteine 149 is part of the active site.

It belongs to the NAGSA dehydrogenase family. Type 1 subfamily.

It localises to the cytoplasm. The catalysed reaction is N-acetyl-L-glutamate 5-semialdehyde + phosphate + NADP(+) = N-acetyl-L-glutamyl 5-phosphate + NADPH + H(+). It participates in amino-acid biosynthesis; L-arginine biosynthesis; N(2)-acetyl-L-ornithine from L-glutamate: step 3/4. Functionally, catalyzes the NADPH-dependent reduction of N-acetyl-5-glutamyl phosphate to yield N-acetyl-L-glutamate 5-semialdehyde. This is N-acetyl-gamma-glutamyl-phosphate reductase from Vesicomyosocius okutanii subsp. Calyptogena okutanii (strain HA).